A 786-amino-acid chain; its full sequence is Toll-like receptor 1 (786 aa).

The first 24 residues, 1–24 (MTSIFHFAIIFMLILQIRIQLSEE), serve as a signal peptide directing secretion. Residues 25–580 (SEFLVDRSKN…HMSELSCNIT (556 aa)) are Extracellular-facing. Asn51 carries N-linked (GlcNAc...) asparagine glycosylation. LRR repeat units lie at residues 54 to 77 (QNYI…LIIS), 78 to 101 (HNRI…LDLS), 102 to 125 (HNKL…SFNA), 126 to 150 (FDAL…STTH), 151 to 175 (LEKS…GETY), 176 to 199 (GEKE…FPTN), 200 to 223 (KEFH…NIKC), 224 to 250 (VLED…SNLT), 251 to 278 (LNNI…YFSI), 279 to 308 (SNVK…HQVV), 309 to 337 (SDVF…SGTR), 338 to 361 (MVHM…NLLT), 362 to 388 (DTVF…KELS), 389 to 414 (KIAE…SYDE), 415 to 437 (KKGD…ILTD), 438 to 457 (TIFR…SNKI), 458 to 478 (KSIP…VAFN), 479 to 500 (SLTD…IDHN), and 501 to 524 (SVSH…AGDN). The cysteines at positions 110 and 132 are disulfide-linked. Residues Asn137 and Asn163 are each glycosylated (N-linked (GlcNAc...) asparagine). The cysteines at positions 223 and 230 are disulfide-linked. An interaction with bacterial lipopeptide region spans residues 313 to 316 (GFPQ). An N-linked (GlcNAc...) asparagine glycan is attached at Asn330. Cys343 and Cys368 are joined by a disulfide. A disulfide bond links Cys419 and Cys442. Asn429 is a glycosylation site (N-linked (GlcNAc...) asparagine). An LRRCT domain is found at 525-579 (PFQCTCELGEFVKNIDQVSSEVLEGWPDSYKCDYPESYRGTLLKDFHMSELSCNI). A glycan (N-linked (GlcNAc...) asparagine) is linked at Asn578. A helical membrane pass occupies residues 581–601 (LLIVTIVATMLVLAVTVTSLC). Residues 602–786 (SYLDLPWYLR…NIKLTEQAKK (185 aa)) are Cytoplasmic-facing. The 142-residue stretch at 635-776 (LQFHAFISYS…LFWANLRAAI (142 aa)) folds into the TIR domain.

The protein belongs to the Toll-like receptor family. Interacts (via extracellular domain) with TLR2. TLR2 seems to exist in heterodimers with either TLR1 or TLR6 before stimulation by the ligand. The heterodimers form bigger oligomers in response to their corresponding ligands as well as further heterotypic associations with other receptors such as CD14 and/or CD36. The activation cluster TLR2:TLR1:CD14 forms in response to triacylated lipopeptides. Binds MYD88 (via TIR domain). Interacts with CNPY3. Interacts with neutrophil recruitment protein from Aedes aegypti saliva; the interaction probably promotes activation of canonical NF-kappa-B signaling in skin-resident macrophages and subsequent expression of neutrophil chemoattractants. As to expression, ubiquitous. Highly expressed in spleen, ovary, peripheral blood leukocytes, thymus and small intestine.

It is found in the cell membrane. The protein resides in the cytoplasmic vesicle. It localises to the phagosome membrane. The protein localises to the membrane raft. Its subcellular location is the golgi apparatus. Its function is as follows. Participates in the innate immune response to microbial agents. Specifically recognizes diacylated and triacylated lipopeptides. Cooperates with TLR2 to mediate the innate immune response to bacterial lipoproteins or lipopeptides. Forms the activation cluster TLR2:TLR1:CD14 in response to triacylated lipopeptides, this cluster triggers signaling from the cell surface and subsequently is targeted to the Golgi in a lipid-raft dependent pathway. Acts via MYD88 and TRAF6, leading to NF-kappa-B activation, cytokine secretion and the inflammatory response. This chain is Toll-like receptor 1 (TLR1), found in Homo sapiens (Human).